A 270-amino-acid polypeptide reads, in one-letter code: Alpha N-terminal protein methyltransferase 1 (270 aa).

S-adenosyl-L-methionine contacts are provided by residues glycine 114, arginine 119, 137-139, 165-166, and glutamine 180; these read EQN and LQ.

It belongs to the methyltransferase superfamily. NTM1 family.

The enzyme catalyses N-terminal L-alanyl-L-prolyl-L-lysyl-[protein] + 3 S-adenosyl-L-methionine = N-terminal N,N,N-trimethyl-L-alanyl-L-prolyl-L-lysyl-[protein] + 3 S-adenosyl-L-homocysteine + 3 H(+). It catalyses the reaction N-terminal L-seryl-L-prolyl-L-lysyl-[protein] + 3 S-adenosyl-L-methionine = N-terminal N,N,N-trimethyl-L-seryl-L-prolyl-L-lysyl-[protein] + 3 S-adenosyl-L-homocysteine + 3 H(+). The catalysed reaction is N-terminal L-prolyl-L-prolyl-L-lysyl-[protein] + 2 S-adenosyl-L-methionine = N-terminal N,N-dimethyl-L-prolyl-L-prolyl-L-lysyl-[protein] + 2 S-adenosyl-L-homocysteine + 2 H(+). Alpha-N-methyltransferase that methylates the N-terminus of target proteins containing the N-terminal motif [Ala/Pro/Ser]-Pro-Lys when the initiator Met is cleaved. Specifically catalyzes mono-, di- or tri-methylation of exposed alpha-amino group of Ala or Ser residue in the [Ala/Ser]-Pro-Lys motif and mono- or di-methylation of Pro in the Pro-Pro-Lys motif. This Dictyostelium discoideum (Social amoeba) protein is Alpha N-terminal protein methyltransferase 1.